Reading from the N-terminus, the 688-residue chain is Soluble guanylate cyclase gcy-35 (688 aa).

His-105 contributes to the heme binding site. Residues 358–401 (LNQSRMSQVELNRTLEETTKKLKKMAQELEIEKQKTDELLCELM) adopt a coiled-coil conformation. The Guanylate cyclase domain maps to 424–552 (TLLFTDIVTF…DTVNVANKME (129 aa)). Residues Asp-429 and Asp-473 each contribute to the Mg(2+) site. Residues 644 to 688 (VENGNSAQNNHNNNNNTHHSGRKLMNGSSVDPGSHHIRSPTCTIS) form a disordered region. Low complexity predominate over residues 646–659 (NGNSAQNNHNNNNN).

The protein belongs to the adenylyl cyclase class-4/guanylyl cyclase family. Heterodimer; heterodimerizes with gcy-36, and possibly with other soluble guanylate cyclases. Requires heme as cofactor. Expressed in URX, AQR and PQR neurons. Also expressed in ALN, SDQ and BDU neurons, and variably in AVM, PLM and PLN neurons, pharyngeal and body wall muscles, and the excretory cell.

It is found in the cytoplasm. It localises to the cell projection. The protein resides in the dendrite. The catalysed reaction is GTP = 3',5'-cyclic GMP + diphosphate. With respect to regulation, regulated by molecular oxygen, which binds to the heme binding site. Probably not activated by nitric oxide (NO). In terms of biological role, plays a central role in social feeding behavior and oxygen sensation by synthesizing 3',5'-cyclic guanosine monophosphate (cGMP) from GTP. Oxygen, which binds to its heme-binding sites, probably regulates social behavior by modulating its activity. cGMP is a common second messenger in sensory transduction and is implicated in oxygen sensation. Indeed, C.elegans exhibits a strong behavioral preference for 5-12% oxygen, avoiding higher and lower oxygen levels; a higher level of oxygen inducing a naturally polymorphic social feeding behavior. Involved in avoidance of hyperoxia and for oxygen-induced aggregation and bordering, probably by mediating oxygen-sensing in URX, AQR and PQR sensory neurons. The polypeptide is Soluble guanylate cyclase gcy-35 (gcy-35) (Caenorhabditis elegans).